We begin with the raw amino-acid sequence, 428 residues long: Histidine--tRNA ligase (428 aa).

It belongs to the class-II aminoacyl-tRNA synthetase family. As to quaternary structure, homodimer.

It is found in the cytoplasm. The enzyme catalyses tRNA(His) + L-histidine + ATP = L-histidyl-tRNA(His) + AMP + diphosphate + H(+). The protein is Histidine--tRNA ligase of Ectopseudomonas mendocina (strain ymp) (Pseudomonas mendocina).